Reading from the N-terminus, the 351-residue chain is ABC transporter nucleoside-binding protein BmpA (351 aa).

Residues 1–21 (MKKRVIAVSAIALASVAVLAG) form the signal peptide. Residue Cys22 is the site of N-palmitoyl cysteine attachment. The S-diacylglycerol cysteine moiety is linked to residue Cys22.

It belongs to the BMP lipoprotein family. In terms of assembly, the complex is composed of two ATP-binding proteins (NupA), two transmembrane proteins (NupB and NupC) and a solute-binding protein (BmpA).

The protein resides in the cell membrane. Part of an ABC transporter complex involved in the uptake of all common nucleosides. The chain is ABC transporter nucleoside-binding protein BmpA from Lactococcus lactis subsp. cremoris (strain MG1363).